We begin with the raw amino-acid sequence, 735 residues long: Catalase-peroxidase (735 aa).

The segment covering 1–10 (MMDGAQTNSG) has biased composition (polar residues). The interval 1–20 (MMDGAQTNSGGCPVMHGGGS) is disordered. Residues 100 to 228 (WHSAGTYRTY…LAAVQMGLIY (129 aa)) constitute a cross-link (tryptophyl-tyrosyl-methioninium (Trp-Tyr) (with M-254)). The active-site Proton acceptor is His101. A cross-link (tryptophyl-tyrosyl-methioninium (Tyr-Met) (with W-100)) is located at residues 228 to 254 (YVNPQGPDGNPDPLASAFDIRDTFARM). His269 serves as a coordination point for heme b.

Belongs to the peroxidase family. Peroxidase/catalase subfamily. Homodimer or homotetramer. Requires heme b as cofactor. In terms of processing, formation of the three residue Trp-Tyr-Met cross-link is important for the catalase, but not the peroxidase activity of the enzyme.

It carries out the reaction H2O2 + AH2 = A + 2 H2O. The catalysed reaction is 2 H2O2 = O2 + 2 H2O. In terms of biological role, bifunctional enzyme with both catalase and broad-spectrum peroxidase activity. The protein is Catalase-peroxidase of Jannaschia sp. (strain CCS1).